Consider the following 234-residue polypeptide: Orotidine 5'-phosphate decarboxylase (234 aa).

Substrate is bound by residues D11, K33, 60–69 (DLKFHDIPNT), T120, R181, Q190, G210, and R211. Residue K62 is the Proton donor of the active site.

The protein belongs to the OMP decarboxylase family. Type 1 subfamily. Homodimer.

The enzyme catalyses orotidine 5'-phosphate + H(+) = UMP + CO2. It functions in the pathway pyrimidine metabolism; UMP biosynthesis via de novo pathway; UMP from orotate: step 2/2. Functionally, catalyzes the decarboxylation of orotidine 5'-monophosphate (OMP) to uridine 5'-monophosphate (UMP). In Aliivibrio fischeri (strain ATCC 700601 / ES114) (Vibrio fischeri), this protein is Orotidine 5'-phosphate decarboxylase.